Reading from the N-terminus, the 346-residue chain is Holliday junction branch migration complex subunit RuvB (346 aa).

The tract at residues 1–181 (MSDRNPLIDA…FGIPVRLNFY (181 aa)) is large ATPase domain (RuvB-L). ATP is bound by residues Leu20, Arg21, Gly62, Lys65, Thr66, Thr67, 128 to 130 (EDF), Arg171, Tyr181, and Arg218. Thr66 is a binding site for Mg(2+). The interval 182 to 252 (TVEELEYIVR…IADEALSRLE (71 aa)) is small ATPAse domain (RuvB-S). The segment at 255–346 (NRGLDQLDRR…SQYGLFMEDE (92 aa)) is head domain (RuvB-H). Positions 291, 310, and 315 each coordinate DNA.

This sequence belongs to the RuvB family. As to quaternary structure, homohexamer. Forms an RuvA(8)-RuvB(12)-Holliday junction (HJ) complex. HJ DNA is sandwiched between 2 RuvA tetramers; dsDNA enters through RuvA and exits via RuvB. An RuvB hexamer assembles on each DNA strand where it exits the tetramer. Each RuvB hexamer is contacted by two RuvA subunits (via domain III) on 2 adjacent RuvB subunits; this complex drives branch migration. In the full resolvosome a probable DNA-RuvA(4)-RuvB(12)-RuvC(2) complex forms which resolves the HJ.

The protein resides in the cytoplasm. It catalyses the reaction ATP + H2O = ADP + phosphate + H(+). Functionally, the RuvA-RuvB-RuvC complex processes Holliday junction (HJ) DNA during genetic recombination and DNA repair, while the RuvA-RuvB complex plays an important role in the rescue of blocked DNA replication forks via replication fork reversal (RFR). RuvA specifically binds to HJ cruciform DNA, conferring on it an open structure. The RuvB hexamer acts as an ATP-dependent pump, pulling dsDNA into and through the RuvAB complex. RuvB forms 2 homohexamers on either side of HJ DNA bound by 1 or 2 RuvA tetramers; 4 subunits per hexamer contact DNA at a time. Coordinated motions by a converter formed by DNA-disengaged RuvB subunits stimulates ATP hydrolysis and nucleotide exchange. Immobilization of the converter enables RuvB to convert the ATP-contained energy into a lever motion, pulling 2 nucleotides of DNA out of the RuvA tetramer per ATP hydrolyzed, thus driving DNA branch migration. The RuvB motors rotate together with the DNA substrate, which together with the progressing nucleotide cycle form the mechanistic basis for DNA recombination by continuous HJ branch migration. Branch migration allows RuvC to scan DNA until it finds its consensus sequence, where it cleaves and resolves cruciform DNA. In Brucella melitensis biotype 2 (strain ATCC 23457), this protein is Holliday junction branch migration complex subunit RuvB.